Consider the following 217-residue polypeptide: Ribonuclease HII (217 aa).

One can recognise an RNase H type-2 domain in the interval 26-215 (EIVCGVDEAG…VREALDLMAG (190 aa)). A divalent metal cation contacts are provided by D32, E33, and D124.

The protein belongs to the RNase HII family. Mn(2+) is required as a cofactor. It depends on Mg(2+) as a cofactor.

It localises to the cytoplasm. The catalysed reaction is Endonucleolytic cleavage to 5'-phosphomonoester.. Endonuclease that specifically degrades the RNA of RNA-DNA hybrids. This Burkholderia ambifaria (strain ATCC BAA-244 / DSM 16087 / CCUG 44356 / LMG 19182 / AMMD) (Burkholderia cepacia (strain AMMD)) protein is Ribonuclease HII.